Here is a 253-residue protein sequence, read N- to C-terminus: Precorrin-4 C(11)-methyltransferase (253 aa).

This sequence belongs to the precorrin methyltransferase family.

It carries out the reaction precorrin-4 + S-adenosyl-L-methionine = precorrin-5 + S-adenosyl-L-homocysteine. It participates in cofactor biosynthesis; adenosylcobalamin biosynthesis; cob(II)yrinate a,c-diamide from precorrin-2 (aerobic route): step 4/10. In terms of biological role, catalyzes the methylation of C-11 in precorrin-4 to form precorrin-5. This Sinorhizobium sp protein is Precorrin-4 C(11)-methyltransferase (cobM).